We begin with the raw amino-acid sequence, 835 residues long: MKTSRLSTVPTSSSSTSTSSSPSSSSGSGSSTNTVGSRLFTQTKVDNSPLDFENEKELQKKLDDIVSEFRNKDKEWTFRLKALQILQRIINGNGIEFKGWSSMLRSISPALIEQLTELRSTIVKEACASVSLLGFRMKSKFEPFALQYTQALIRMVPVKTTIISESAHQTLKDILESVSTKNLLQTFLDASLDQHNEQLRKRCSEYIYIVLSRAIENDGMILVSSVPALEKSIQKLLIDGASETRQMARYCFWAYSELNEKSATLFYTHFTPTTQKNLFTVQEHLKGDQLEFCEKLKNSLFEEEQHQKMVEDSNDLDFDLNDFKKDNNNNNNNDNNNNNNTSTTRSKTPTTGRASGLKIRSSTNTTPTTTTTTTTTTTPNKTQSSSSTSLRSGSSIGNRTEVSSSIKRPLDASNIIRSKSSLGTTRKDVITGGSGGGGGGGMSTSSQSPISKTPTTMITKTASSSSPNLATSTQSGRYSSIGTRAITTSLSKQSSSSNLTRSLPPIIKSPISPPGPTPPAPTLTKSKSTPSSPLSTPTPSKLSSSTNTTTSTSTTTTSTTPTRRISSSTTSSPIGSTTTSALKRPSTLTSTPKSSSSSSSSSSSATLSSTKTPSTTATNSTTSSATKKSFITKTNPTDEQTTTPKSITKTTTTTTTANSTSTSSIKRRSDNVDEIDIESLEISLNQDNKLAFNEISDEISNNLRDAKKGLSFYEKELTLDDLENNNNNNSNSNSNSNSNNNSKRSSVSSFTNSIKESTTADVDFNWLEDSVHDSLIDDDVLDFDENNNSTYIPRNNNNNNNNNNIIKEQQEQQEGEQQEERQQEQILDEDDELMF.

Disordered stretches follow at residues 1-38 (MKTS…VGSR), 317-477 (DFDL…QSGR), 489-668 (SLSK…IKRR), 721-750 (DLEN…VSSF), and 810-835 (QEQQ…ELMF). 3 stretches are compositionally biased toward low complexity: residues 7-37 (STVP…TVGS), 328-351 (NNNN…TPTT), and 361-395 (SSTN…SGSS). Polar residues-rich tracts occupy residues 396–406 (IGNRTEVSSSI) and 415–424 (IIRSKSSLGT). Residues 432-442 (GGSGGGGGGGM) are compositionally biased toward gly residues. Residues 449–477 (PISKTPTTMITKTASSSSPNLATSTQSGR) are compositionally biased toward polar residues. A compositionally biased stretch (low complexity) spans 489 to 510 (SLSKQSSSSNLTRSLPPIIKSP). Over residues 511–521 (ISPPGPTPPAP) the composition is skewed to pro residues. Low complexity predominate over residues 522-629 (TLTKSKSTPS…STTSSATKKS (108 aa)). Residues 631–640 (ITKTNPTDEQ) show a composition bias toward polar residues. Composition is skewed to low complexity over residues 641–664 (TTTP…STSS) and 724–750 (NNNN…VSSF). Positions 826 to 835 (ILDEDDELMF) are enriched in acidic residues.

This is an uncharacterized protein from Dictyostelium discoideum (Social amoeba).